A 230-amino-acid polypeptide reads, in one-letter code: Large ribosomal subunit protein uL1 (230 aa).

The protein belongs to the universal ribosomal protein uL1 family. Part of the 50S ribosomal subunit.

Its function is as follows. Binds directly to 23S rRNA. The L1 stalk is quite mobile in the ribosome, and is involved in E site tRNA release. Protein L1 is also a translational repressor protein, it controls the translation of the L11 operon by binding to its mRNA. This chain is Large ribosomal subunit protein uL1, found in Bifidobacterium adolescentis (strain ATCC 15703 / DSM 20083 / NCTC 11814 / E194a).